The primary structure comprises 201 residues: Large ribosomal subunit protein uL4 (201 aa).

Positions 43–71 are disordered; that stretch reads TRAQKTRSEVSGGGKKPWAQKGTGRARAG.

This sequence belongs to the universal ribosomal protein uL4 family. As to quaternary structure, part of the 50S ribosomal subunit.

Its function is as follows. One of the primary rRNA binding proteins, this protein initially binds near the 5'-end of the 23S rRNA. It is important during the early stages of 50S assembly. It makes multiple contacts with different domains of the 23S rRNA in the assembled 50S subunit and ribosome. Functionally, forms part of the polypeptide exit tunnel. The polypeptide is Large ribosomal subunit protein uL4 (Pseudoalteromonas translucida (strain TAC 125)).